An 89-amino-acid chain; its full sequence is Cell division topological specificity factor (89 aa).

The protein belongs to the MinE family.

Its function is as follows. Prevents the cell division inhibition by proteins MinC and MinD at internal division sites while permitting inhibition at polar sites. This ensures cell division at the proper site by restricting the formation of a division septum at the midpoint of the long axis of the cell. The protein is Cell division topological specificity factor of Laribacter hongkongensis (strain HLHK9).